Consider the following 211-residue polypeptide: MAVLSLLLLGGLWSAVGASNMAVVTCGSVVKLLNTRHNVRLHSHDVRYGSGSGQQSVTGVTSVDDSNSYWRIRGKTATVCERGTPIKCGQPIRLTHINTGRNLHSHHFTSPLSGNQEVSAFGEEGEGDYLDDWTVLCNGPYWVRDGEVRFKHSSTDVLLSVTGEQYGRPISGQKEVHGMAQPSQNNYWKAMEGIFMKPSELLRAEVHHAEL.

Residues 1-18 (MAVLSLLLLGGLWSAVGA) form the signal peptide. MIR domains are found at residues 21 to 75 (MAVV…IRGK), 83 to 138 (GTPI…VLCN), and 139 to 193 (GPYW…AMEG).

Ubiquitously expressed with highest expression in liver and kidney.

It is found in the secreted. The chain is Stromal cell-derived factor 2 (Sdf2) from Mus musculus (Mouse).